A 316-amino-acid chain; its full sequence is tRNA uridine(34) hydroxylase (316 aa).

The 95-residue stretch at 123–217 folds into the Rhodanese domain; it reads LDEDTVVIDA…YGKNPETRGE (95 aa). The Cysteine persulfide intermediate role is filled by Cys-177.

It belongs to the TrhO family.

The catalysed reaction is uridine(34) in tRNA + AH2 + O2 = 5-hydroxyuridine(34) in tRNA + A + H2O. Catalyzes oxygen-dependent 5-hydroxyuridine (ho5U) modification at position 34 in tRNAs. This Enterococcus faecalis (strain ATCC 700802 / V583) protein is tRNA uridine(34) hydroxylase.